The following is a 141-amino-acid chain: Putative pre-16S rRNA nuclease (141 aa).

It belongs to the YqgF nuclease family.

Its subcellular location is the cytoplasm. In terms of biological role, could be a nuclease involved in processing of the 5'-end of pre-16S rRNA. This is Putative pre-16S rRNA nuclease from Shewanella denitrificans (strain OS217 / ATCC BAA-1090 / DSM 15013).